Here is a 199-residue protein sequence, read N- to C-terminus: N-(5'-phosphoribosyl)anthranilate isomerase (199 aa).

Belongs to the TrpF family.

It carries out the reaction N-(5-phospho-beta-D-ribosyl)anthranilate = 1-(2-carboxyphenylamino)-1-deoxy-D-ribulose 5-phosphate. Its pathway is amino-acid biosynthesis; L-tryptophan biosynthesis; L-tryptophan from chorismate: step 3/5. The chain is N-(5'-phosphoribosyl)anthranilate isomerase from Streptococcus pneumoniae (strain ATCC 700669 / Spain 23F-1).